The primary structure comprises 211 residues: Endonuclease V (211 aa).

Positions 37 and 102 each coordinate Mg(2+).

It belongs to the endonuclease V family. It depends on Mg(2+) as a cofactor.

The protein resides in the cytoplasm. It catalyses the reaction Endonucleolytic cleavage at apurinic or apyrimidinic sites to products with a 5'-phosphate.. In terms of biological role, DNA repair enzyme involved in the repair of deaminated bases. Selectively cleaves double-stranded DNA at the second phosphodiester bond 3' to a deoxyinosine leaving behind the intact lesion on the nicked DNA. The chain is Endonuclease V from Ignicoccus hospitalis (strain KIN4/I / DSM 18386 / JCM 14125).